We begin with the raw amino-acid sequence, 579 residues long: PCNA-interacting partner (579 aa).

Positions 480–543 are disordered; sequence TSFGNVHLDR…AKIPKKSNDS (64 aa). The span at 486–496 shows a compositional bias: basic and acidic residues; sequence HLDRSKNEKVS.

This sequence belongs to the PARI family. Interacts with RAD51 and PCNA. Interacts with PARP1. Interacts with TASOR. As to expression, restricted to testis. Overexpressed in multiple cancer cells.

It localises to the cytoplasm. The protein resides in the nucleus. Required to suppress inappropriate homologous recombination, thereby playing a central role DNA repair and in the maintenance of genomic stability. Antagonizes homologous recombination by interfering with the formation of the RAD51-DNA homologous recombination structure. Binds single-strand DNA and poly(A) homopolymers. Positively regulate the poly(ADP-ribosyl)ation activity of PARP1; however such function may be indirect. In Homo sapiens (Human), this protein is PCNA-interacting partner (PARPBP).